Reading from the N-terminus, the 495-residue chain is Probable cytosol aminopeptidase (495 aa).

Positions 267 and 272 each coordinate Mn(2+). The active site involves Lys279. The Mn(2+) site is built by Asp290, Asp349, and Glu351. Residue Arg353 is part of the active site.

It belongs to the peptidase M17 family. The cofactor is Mn(2+).

The protein localises to the cytoplasm. The enzyme catalyses Release of an N-terminal amino acid, Xaa-|-Yaa-, in which Xaa is preferably Leu, but may be other amino acids including Pro although not Arg or Lys, and Yaa may be Pro. Amino acid amides and methyl esters are also readily hydrolyzed, but rates on arylamides are exceedingly low.. The catalysed reaction is Release of an N-terminal amino acid, preferentially leucine, but not glutamic or aspartic acids.. Presumably involved in the processing and regular turnover of intracellular proteins. Catalyzes the removal of unsubstituted N-terminal amino acids from various peptides. In Histophilus somni (strain 2336) (Haemophilus somnus), this protein is Probable cytosol aminopeptidase.